We begin with the raw amino-acid sequence, 384 residues long: GTPase Obg (384 aa).

Residues 1–159 (MKFIDEAKIE…RSLQLELKVL (159 aa)) enclose the Obg domain. The disordered stretch occupies residues 20–46 (ATSFRREKFVPRGGPDGGDGGKGGSVW). A compositionally biased stretch (gly residues) spans 33–43 (GPDGGDGGKGG). The OBG-type G domain occupies 160 to 348 (ADVGLLGMPN…LVHQINQYLI (189 aa)). GTP-binding positions include 166 to 173 (GMPNAGKS), 191 to 195 (FTTLH), 213 to 216 (DIPG), 284 to 287 (NKLD), and 329 to 331 (SAL). Mg(2+) contacts are provided by serine 173 and threonine 193. Residues 364-384 (ATNVEIAEQQPKTDTGVFKPE) are disordered.

The protein belongs to the TRAFAC class OBG-HflX-like GTPase superfamily. OBG GTPase family. Monomer. Requires Mg(2+) as cofactor.

It localises to the cytoplasm. Functionally, an essential GTPase which binds GTP, GDP and possibly (p)ppGpp with moderate affinity, with high nucleotide exchange rates and a fairly low GTP hydrolysis rate. Plays a role in control of the cell cycle, stress response, ribosome biogenesis and in those bacteria that undergo differentiation, in morphogenesis control. The protein is GTPase Obg of Neisseria meningitidis serogroup A / serotype 4A (strain DSM 15465 / Z2491).